Consider the following 496-residue polypeptide: L-arabinose isomerase (496 aa).

4 residues coordinate Mn(2+): glutamate 302, glutamate 329, histidine 346, and histidine 445.

Belongs to the arabinose isomerase family. The cofactor is Mn(2+).

It catalyses the reaction beta-L-arabinopyranose = L-ribulose. Its pathway is carbohydrate degradation; L-arabinose degradation via L-ribulose; D-xylulose 5-phosphate from L-arabinose (bacterial route): step 1/3. Catalyzes the conversion of L-arabinose to L-ribulose. The chain is L-arabinose isomerase from Thermotoga neapolitana (strain ATCC 49049 / DSM 4359 / NBRC 107923 / NS-E).